Reading from the N-terminus, the 324-residue chain is Viral cathepsin (324 aa).

A signal peptide spans methionine 1–alanine 16. The propeptide at alanine 17–glycine 113 is activation peptide. 3 cysteine pairs are disulfide-bonded: cysteine 134-cysteine 175, cysteine 168-cysteine 208, and cysteine 263-cysteine 311. The active site involves cysteine 137. Asparagine 159 is a glycosylation site (N-linked (GlcNAc...) asparagine; by host). Residues histidine 270 and asparagine 290 contribute to the active site.

The protein belongs to the peptidase C1 family. Synthesized as an inactive proenzyme and activated by proteolytic removal of the inhibitory propeptide.

The catalysed reaction is Endopeptidase of broad specificity, hydrolyzing substrates of both cathepsin L and cathepsin B.. Its function is as follows. Cysteine protease that plays an essential role in host liquefaction to facilitate horizontal transmission of the virus. May participate in the degradation of foreign protein expressed by the baculovirus system. The sequence is that of Viral cathepsin (VCATH) from Orgyia pseudotsugata (Douglas-fir tussock moth).